The chain runs to 154 residues: Myoglobin (154 aa).

The Globin domain occupies glycine 2–lysine 148. At serine 4 the chain carries Phosphoserine. Histidine 65 serves as a coordination point for nitrite. Residue histidine 65 participates in O2 binding. A Phosphothreonine modification is found at threonine 68. Histidine 94 provides a ligand contact to heme b.

Belongs to the globin family. In terms of assembly, monomeric.

The protein localises to the cytoplasm. Its subcellular location is the sarcoplasm. It catalyses the reaction Fe(III)-heme b-[protein] + nitric oxide + H2O = Fe(II)-heme b-[protein] + nitrite + 2 H(+). It carries out the reaction H2O2 + AH2 = A + 2 H2O. Monomeric heme protein which primary function is to store oxygen and facilitate its diffusion within muscle tissues. Reversibly binds oxygen through a pentacoordinated heme iron and enables its timely and efficient release as needed during periods of heightened demand. Depending on the oxidative conditions of tissues and cells, and in addition to its ability to bind oxygen, it also has a nitrite reductase activity whereby it regulates the production of bioactive nitric oxide. Under stress conditions, like hypoxia and anoxia, it also protects cells against reactive oxygen species thanks to its pseudoperoxidase activity. This Lagothrix lagotricha (Brown woolly monkey) protein is Myoglobin (MB).